We begin with the raw amino-acid sequence, 512 residues long: Histidine ammonia-lyase (512 aa).

A cross-link (5-imidazolinone (Ala-Gly)) is located at residues Ala142–Gly144. Ser143 carries the post-translational modification 2,3-didehydroalanine (Ser).

Belongs to the PAL/histidase family. Contains an active site 4-methylidene-imidazol-5-one (MIO), which is formed autocatalytically by cyclization and dehydration of residues Ala-Ser-Gly.

The protein resides in the cytoplasm. The catalysed reaction is L-histidine = trans-urocanate + NH4(+). Its pathway is amino-acid degradation; L-histidine degradation into L-glutamate; N-formimidoyl-L-glutamate from L-histidine: step 1/3. The protein is Histidine ammonia-lyase of Bartonella tribocorum (strain CIP 105476 / IBS 506).